Consider the following 210-residue polypeptide: uncharacterized protein (210 aa).

The segment covering 101–114 (QELPEPSSPQSQSS) has biased composition (low complexity). Residues 101 to 166 (QELPEPSSPQ…SSGVSSDLQK (66 aa)) form a disordered region. A compositionally biased stretch (polar residues) spans 147 to 164 (RSTSPVTASTSSGVSSDL).

This is an uncharacterized protein from Alcelaphine herpesvirus 1 (strain C500) (AlHV-1).